Reading from the N-terminus, the 349-residue chain is NADH-ubiquinone oxidoreductase chain 2 (349 aa).

A run of 9 helical transmembrane segments spans residues 3-23, 66-86, 98-118, 139-159, 178-198, 199-219, 240-260, 274-294, and 319-339; these read PYVL…TFAS, AAAM…EWEI, VMLA…LPEV, FALM…TIGL, ILAY…QFAP, SLTL…FLTL, LAAL…LSGF, GLPL…YFYL, and FTMI…LLPL.

Belongs to the complex I subunit 2 family.

It localises to the mitochondrion inner membrane. The catalysed reaction is a ubiquinone + NADH + 5 H(+)(in) = a ubiquinol + NAD(+) + 4 H(+)(out). Core subunit of the mitochondrial membrane respiratory chain NADH dehydrogenase (Complex I) that is believed to belong to the minimal assembly required for catalysis. Complex I functions in the transfer of electrons from NADH to the respiratory chain. The immediate electron acceptor for the enzyme is believed to be ubiquinone. The sequence is that of NADH-ubiquinone oxidoreductase chain 2 (MT-ND2) from Oncorhynchus mykiss (Rainbow trout).